A 1002-amino-acid polypeptide reads, in one-letter code: DNA-directed RNA polymerase 1B, mitochondrial (1002 aa).

Residues 1–21 (MWRYISKHAYSRKFRNSHDSA) constitute a mitochondrion transit peptide. Active-site residues include aspartate 703, lysine 778, and aspartate 935.

This sequence belongs to the phage and mitochondrial RNA polymerase family.

Its subcellular location is the mitochondrion. The catalysed reaction is RNA(n) + a ribonucleoside 5'-triphosphate = RNA(n+1) + diphosphate. Its function is as follows. DNA-dependent RNA polymerase catalyzes the transcription of DNA into RNA using the four ribonucleoside triphosphates as substrates. The polypeptide is DNA-directed RNA polymerase 1B, mitochondrial (RPOT1-TOM) (Nicotiana tabacum (Common tobacco)).